A 150-amino-acid polypeptide reads, in one-letter code: C-C motif chemokine 25 (150 aa).

Positions Met1–Thr23 are cleaved as a signal peptide. 2 disulfide bridges follow: Cys30–Cys58 and Cys31–Cys75.

It belongs to the intercrine beta (chemokine CC) family. As to expression, specifically expressed by thymic dendritic cells. High levels in thymus and small intestine.

It localises to the secreted. Potentially involved in T-cell development. Recombinant protein shows chemotactic activity on thymocytes, macrophages, THP-1 cells, and dendritics cells but is inactive on peripheral blood lymphocytes and neutrophils. Binds to CCR9. Isoform 2 is an antagonist of isoform 1. Binds to atypical chemokine receptor ACKR4 and mediates the recruitment of beta-arrestin (ARRB1/2) to ACKR4. In Homo sapiens (Human), this protein is C-C motif chemokine 25 (CCL25).